The following is a 169-amino-acid chain: Protein HIGH ARSENIC CONTENT 1, mitochondrial (169 aa).

The N-terminal 59 residues, 1 to 59 (MYTYSLLNLSHCRRQTRKKRKTDHTEGFLMEETKPKTVEDVETVDVYTAKGFLSTGHRY), are a transit peptide targeting the mitochondrion. Residues 60–153 (LDVRTNEEFA…WVDAGFAGDK (94 aa)) enclose the Rhodanese domain. Cysteine 113 serves as the catalytic Cysteine persulfide intermediate.

Expressed in root hairs, epidermal cells at the surface of the root and in the pericycle within the stele.

It is found in the mitochondrion. It catalyses the reaction [glutaredoxin]-dithiol + arsenate + glutathione + H(+) = glutathionyl-S-S-[glutaredoxin] + arsenite + H2O. With respect to regulation, inhibited by trobenzenesulphonic acid (TNBS). Functionally, arsenate reductase critical for arsenic tolerance. Reduces arsenate to arsenite in the root, facilitating efflux of arsenic back into the soil to limit both its accumulation in the root and transport to the shoot. Essential for arsenite efflux from the root, but not necessary for arsenate uptake. The protein is Protein HIGH ARSENIC CONTENT 1, mitochondrial of Arabidopsis thaliana (Mouse-ear cress).